The sequence spans 690 residues: Dual specificity protein kinase lkh1 (690 aa).

A disordered region spans residues 39–70 (PNLPPPFSVHQLQSFVPPQPPSSSSPSTTGTV). The Protein kinase domain occupies 362 to 682 (YTVVRLLGHG…AKEALWHPFF (321 aa)). Residues 368–376 (LGHGTFGKV) and K391 contribute to the ATP site. D488 serves as the catalytic Proton acceptor.

Belongs to the protein kinase superfamily. CMGC Ser/Thr protein kinase family. Lammer subfamily. In terms of processing, autophosphorylates on all three types of residues.

It catalyses the reaction L-seryl-[protein] + ATP = O-phospho-L-seryl-[protein] + ADP + H(+). It carries out the reaction L-threonyl-[protein] + ATP = O-phospho-L-threonyl-[protein] + ADP + H(+). The enzyme catalyses L-tyrosyl-[protein] + ATP = O-phospho-L-tyrosyl-[protein] + ADP + H(+). Protein kinase that may act as a negative regulator of filamentous growth and flocculation. Appears to have a role in normal cell wall and septum formation and in cell separation. May have antagonistic function in the regulation of beta-glucan distribution between the sites for cell wall and septum assembly. This Schizosaccharomyces pombe (strain 972 / ATCC 24843) (Fission yeast) protein is Dual specificity protein kinase lkh1 (lkh1).